A 351-amino-acid polypeptide reads, in one-letter code: Centromere-binding protein 1 (351 aa).

At Met-1 the chain carries N-acetylmethionine. Composition is skewed to polar residues over residues 1–10, 43–52, and 65–77; these read MNSLANNNKL, LLSQESNDGN, and KGTQ…GLTS. Disordered regions lie at residues 1–164, 196–233, and 327–351; these read MNSL…TQQS, KKDI…VERR, and YEDM…PHEA. Residue Ser-45 is modified to Phosphoserine; by ATM or ATR. Ser-48 is subject to Phosphoserine. Ser-84 is subject to Phosphoserine. 2 stretches are compositionally biased toward polar residues: residues 100 to 124 and 138 to 164; these read VNYT…TNAN and TPSN…TQQS. Thr-138 is modified (phosphothreonine). The 49-residue stretch at 222 to 270 folds into the bHLH domain; the sequence is QRKDSHKEVERRRRENINTAINVLSDLLPVRESSKAAILACAAEYIQKL.

As to quaternary structure, binds DNA as a dimer. Associates with MET4 to form a heteromeric complex which also includes MET28.

It localises to the nucleus. The protein resides in the mitochondrion. The protein localises to the chromosome. Its subcellular location is the centromere. Required for chromosome stability and methionine prototrophy. It is involved in chromosomal segregation. Binds to a highly conserved DNA sequence (5'-RTCACRTG-3'), called CDEI, found in centromeres and in several promoters. DNA-binding activity is enhanced by MET28. Required as an auxiliary factor for transcriptional activation of sulfur metabolism together with MET4 and MET28. This chain is Centromere-binding protein 1 (CBF1), found in Saccharomyces cerevisiae (strain ATCC 204508 / S288c) (Baker's yeast).